The primary structure comprises 234 residues: Sugar fermentation stimulation protein homolog (234 aa).

Belongs to the SfsA family.

In Pectobacterium carotovorum subsp. carotovorum (strain PC1), this protein is Sugar fermentation stimulation protein homolog.